Here is a 940-residue protein sequence, read N- to C-terminus: Gamma-aminobutyric acid type B receptor subunit 2 (940 aa).

An N-terminal signal peptide occupies residues 1-40 (MASPPSSGQPRPPPPPPPPARLLLPLLLSLLLWLAPGAWG). At 41–482 (WTRGAPRPPP…LRKISLPLYS (442 aa)) the chain is on the extracellular side. A glycan (N-linked (GlcNAc...) asparagine) is linked at N89. 3 disulfide bridges follow: C107–C134, C236–C265, and C264–C301. 4 N-linked (GlcNAc...) asparagine glycosylation sites follow: N297, N388, N403, and N452. Residues 483–503 (ILSALTILGMIMASAFLFFNI) traverse the membrane as a helical segment. The Cytoplasmic segment spans residues 504-521 (KNRNQKLIKMSSPYMNNL). A helical membrane pass occupies residues 522-542 (IILGGMLSYASIFLFGLDGSF). The Extracellular portion of the chain corresponds to 543-550 (VSEKTFET). A helical transmembrane segment spans residues 551 to 571 (LCTVRTWILTVGYTTAFGAMF). Topologically, residues 572–596 (AKTWRVHAIFKNVKMKKKIIKDQKL) are cytoplasmic. Residues 597-617 (LVIVGGMLLIDLCILICWQAV) traverse the membrane as a helical segment. Topologically, residues 618–653 (DPLRRTVERYSMEPDPAGRDISIRPLLEHCENTHMT) are extracellular. A helical membrane pass occupies residues 654-674 (IWLGIVYAYKGLLMLFGCFLA). Residues 675–690 (WETRNVSIPALNDSKY) lie on the Cytoplasmic side of the membrane. Residues 691–711 (IGMSVYNVGIMCIIGAAVSFL) form a helical membrane-spanning segment. Over 712-719 (TRDQPNVQ) the chain is Extracellular. A helical transmembrane segment spans residues 720-740 (FCIVALVIIFCSTITLCLVFV). At 741–940 (PKLITLRTNP…PSFRVMVSGL (200 aa)) the chain is on the cytoplasmic side. A disordered region spans residues 762–789 (TQNQKKEDSKTSTSVTSVNQASTSRLEG). The segment covering 772–786 (TSTSVTSVNQASTSR) has biased composition (polar residues). Residues S775 and S778 each carry the phosphoserine modification. A coiled-coil region spans residues 780–818 (NQASTSRLEGLQSENHRLRMKITELDKDLEEVTMQLQDT). Residue T818 is modified to Phosphothreonine. Phosphoserine is present on residues S883, S892, S912, S915, S919, and S923.

The protein belongs to the G-protein coupled receptor 3 family. GABA-B receptor subfamily. Heterodimer of GABBR1 and GABBR2. Homodimers may form, but are inactive. Interacts (via C-terminus) with ATF4 (via leucine zipper domain). Interacts with KCTD8, KCTD12 and KCTD16; this interaction determines the pharmacology and kinetics of the receptor response, the KCTD proteins markedly accelerating the GABA-B response, although to different extents. In terms of tissue distribution, highly expressed in areas of the brain including thalamic nuclei, the hippocampus, cerebellar Purkinje cells and the medial habenula, and moderately expressed in the cerebral cortex, certain anterioventral thalamic nuclei, dorsal medial hypothalamic nucleus and suprachiasmatic nuclei. Also weakly expressed in the testis.

It localises to the cell membrane. Its subcellular location is the postsynaptic cell membrane. The protein localises to the perikaryon. The protein resides in the cell projection. It is found in the dendrite. Component of a heterodimeric G-protein coupled receptor for GABA, formed by GABBR1 and GABBR2. Within the heterodimeric GABA receptor, only GABBR1 seems to bind agonists, while GABBR2 mediates coupling to G proteins. Ligand binding causes a conformation change that triggers signaling via guanine nucleotide-binding proteins (G proteins) and modulates the activity of down-stream effectors, such as adenylate cyclase. Signaling inhibits adenylate cyclase, stimulates phospholipase A2, activates potassium channels, inactivates voltage-dependent calcium-channels and modulates inositol phospholipid hydrolysis. Plays a critical role in the fine-tuning of inhibitory synaptic transmission. Pre-synaptic GABA receptor inhibits neurotransmitter release by down-regulating high-voltage activated calcium channels, whereas postsynaptic GABA receptor decreases neuronal excitability by activating a prominent inwardly rectifying potassium (Kir) conductance that underlies the late inhibitory postsynaptic potentials. Not only implicated in synaptic inhibition but also in hippocampal long-term potentiation, slow wave sleep, muscle relaxation and antinociception. The sequence is that of Gamma-aminobutyric acid type B receptor subunit 2 (Gabbr2) from Rattus norvegicus (Rat).